Reading from the N-terminus, the 515-residue chain is MVVAYKHEPFTDFSVEANKLAFEEGLKKVESYLGQDYPLIIGGEKITTEDKIVSVNPANKEELVGRVSKASRELAEKAMQVADETFQTWRKSKPEMRADILFRAAAIVRRRKHEFSAILVKEAGKPWNEADADTAEAIDFMEYYGRQMLKLKDGIPVESRPIEYNRFSYIPLGVGVIISPWNFPFAIMAGMTTAALVSGNTVLLKPASTTPVVAAKFMEVLEEAGLPAGVVNFVPGNGSEVGDYLVDHPRTRFISFTGSRDVGIRIYERAAKVNPGQIWLKRVIAEMGGKDTIVVDKEADLELAAKSIVASAFGFSGQKCSACSRAVIHEDVYDHVLNRAVELTKELTVANPAVLGTNMGPVNDQAAFDKVMSYVAIGKEEGRILAGGEGDDSKGWFIQPTIVADVAEDARLMKEEIFGPVVAFCKAKDFDHALAIANNTEYGLTGAVISNNRDHIEKAREDFHVGNLYFNRGCTGAIVGYQPFGGFNMSGTDSKAGGPDYLALHMQAKTTSETL.

Active-site residues include E286 and C320.

It belongs to the aldehyde dehydrogenase family. RocA subfamily.

The enzyme catalyses L-glutamate 5-semialdehyde + NAD(+) + H2O = L-glutamate + NADH + 2 H(+). It participates in amino-acid degradation; L-proline degradation into L-glutamate; L-glutamate from L-proline: step 2/2. This Bacillus anthracis (strain A0248) protein is 1-pyrroline-5-carboxylate dehydrogenase.